The chain runs to 83 residues: Kunitz-type serine protease inhibitor mulgin-5 (83 aa).

Residues 1 to 24 form the signal peptide; sequence MSSGGLLLLLGLLTLWEGLTPVSS. The 51-residue stretch at 31–81 folds into the BPTI/Kunitz inhibitor domain; that stretch reads CHLPHDPGPCKGNFQAFYYHPVRRTCLEFIYGGCQGNPNNFKTIDECKRTC. 3 disulfides stabilise this stretch: Cys31–Cys81, Cys40–Cys64, and Cys56–Cys77.

Belongs to the venom Kunitz-type family. Expressed by the venom gland.

It is found in the secreted. Serine protease inhibitor. The sequence is that of Kunitz-type serine protease inhibitor mulgin-5 from Pseudechis australis (Mulga snake).